A 266-amino-acid chain; its full sequence is NADP-dependent mannitol dehydrogenase (266 aa).

Positions 107 and 140 each coordinate NADP(+). The active-site Proton donor is S159. NADP(+) is bound by residues Y174, K178, I206, and T208. Y174 (proton acceptor) is an active-site residue. The active-site Lowers pKa of active site Tyr is the K178.

It belongs to the short-chain dehydrogenases/reductases (SDR) family. As to quaternary structure, homotetramer.

It carries out the reaction D-mannitol + NADP(+) = D-fructose + NADPH + H(+). Functionally, catalyzes the interconversion between D-mannitol and D-fructose. Plays a key role in liamocins biosynthesis by providing the mannitol moity that is linked to 3,5-dihydroxydecanoic acid (provided by the HR-PKS PKS1) via ester bond formation catalyzed by the esterase EST1. The polypeptide is NADP-dependent mannitol dehydrogenase (Aureobasidium melanogenum (Aureobasidium pullulans var. melanogenum)).